The sequence spans 479 residues: Aspartyl/glutamyl-tRNA(Asn/Gln) amidotransferase subunit B (479 aa).

It belongs to the GatB/GatE family. GatB subfamily. As to quaternary structure, heterotrimer of A, B and C subunits.

It carries out the reaction L-glutamyl-tRNA(Gln) + L-glutamine + ATP + H2O = L-glutaminyl-tRNA(Gln) + L-glutamate + ADP + phosphate + H(+). The catalysed reaction is L-aspartyl-tRNA(Asn) + L-glutamine + ATP + H2O = L-asparaginyl-tRNA(Asn) + L-glutamate + ADP + phosphate + 2 H(+). In terms of biological role, allows the formation of correctly charged Asn-tRNA(Asn) or Gln-tRNA(Gln) through the transamidation of misacylated Asp-tRNA(Asn) or Glu-tRNA(Gln) in organisms which lack either or both of asparaginyl-tRNA or glutaminyl-tRNA synthetases. The reaction takes place in the presence of glutamine and ATP through an activated phospho-Asp-tRNA(Asn) or phospho-Glu-tRNA(Gln). The protein is Aspartyl/glutamyl-tRNA(Asn/Gln) amidotransferase subunit B of Streptococcus pyogenes serotype M12 (strain MGAS2096).